The sequence spans 450 residues: tRNA modification GTPase MnmE (450 aa).

(6S)-5-formyl-5,6,7,8-tetrahydrofolate contacts are provided by R23, E80, and R123. Residues 219–372 (GLHVVLAGKP…LRQRLLQLAG (154 aa)) form the TrmE-type G domain. K(+) is bound at residue N229. Residues 229–234 (NVGKSS), 248–254 (TPIAGTT), 273–276 (DTAG), and 353–355 (SAR) contribute to the GTP site. S233 is a Mg(2+) binding site. K(+) is bound by residues T248, I250, and T253. Residue T254 participates in Mg(2+) binding. K450 contacts (6S)-5-formyl-5,6,7,8-tetrahydrofolate.

This sequence belongs to the TRAFAC class TrmE-Era-EngA-EngB-Septin-like GTPase superfamily. TrmE GTPase family. Homodimer. Heterotetramer of two MnmE and two MnmG subunits. The cofactor is K(+).

The protein resides in the cytoplasm. Its function is as follows. Exhibits a very high intrinsic GTPase hydrolysis rate. Involved in the addition of a carboxymethylaminomethyl (cmnm) group at the wobble position (U34) of certain tRNAs, forming tRNA-cmnm(5)s(2)U34. This is tRNA modification GTPase MnmE from Bordetella bronchiseptica (strain ATCC BAA-588 / NCTC 13252 / RB50) (Alcaligenes bronchisepticus).